A 348-amino-acid polypeptide reads, in one-letter code: Isopentenyl-diphosphate delta-isomerase (348 aa).

Substrate is bound at residue 14–15; the sequence is RK. Residues serine 72, 73-75, serine 103, and asparagine 131 each bind FMN; that span reads SMT. Residue 103–105 participates in substrate binding; that stretch reads SQR. Substrate is bound at residue glutamine 166. Residue glutamate 167 participates in Mg(2+) binding. FMN contacts are provided by residues lysine 198, threonine 228, 278–280, and 299–300; these read GIR and AR.

Belongs to the IPP isomerase type 2 family. Homooctamer. Dimer of tetramers. It depends on FMN as a cofactor. NADPH is required as a cofactor. The cofactor is Mg(2+).

The protein resides in the cytoplasm. It catalyses the reaction isopentenyl diphosphate = dimethylallyl diphosphate. Functionally, involved in the biosynthesis of isoprenoids. Catalyzes the 1,3-allylic rearrangement of the homoallylic substrate isopentenyl (IPP) to its allylic isomer, dimethylallyl diphosphate (DMAPP). The sequence is that of Isopentenyl-diphosphate delta-isomerase from Synechococcus sp. (strain ATCC 27144 / PCC 6301 / SAUG 1402/1) (Anacystis nidulans).